The following is a 918-amino-acid chain: Plasma membrane ATPase 1 (918 aa).

Over residues 1–18 the composition is skewed to low complexity; the sequence is MTDTSSSSSSSSASSVSA. The disordered stretch occupies residues 1–84; the sequence is MTDTSSSSSS…VPEEYLQTDP (84 aa). The Cytoplasmic segment spans residues 1–115; sequence MTDTSSSSSS…ADEKESLVVK (115 aa). The segment covering 33 to 47 has biased composition (acidic residues); it reads AASESSDDDDIDALI. A Phosphoserine modification is found at serine 61. A helical transmembrane segment spans residues 116-136; sequence FVMFFVGPIQFVMEAAAILAA. Topologically, residues 137–140 are extracellular; the sequence is GLSD. A helical membrane pass occupies residues 141–160; sequence WVDFGVICGLLMLNAGVGFV. The Cytoplasmic portion of the chain corresponds to 161 to 291; that stretch reads QEFQAGSIVD…GQGHFTEVLN (131 aa). The residue at position 175 (threonine 175) is a Phosphothreonine. A Glycyl lysine isopeptide (Lys-Gly) (interchain with G-Cter in ubiquitin) cross-link involves residue lysine 252. The chain crosses the membrane as a helical span at residues 292 to 313; it reads GIGIILLVLVIATLLLVWTACF. Residues 314–325 are Extracellular-facing; sequence YRTNGIVRILRY. The chain crosses the membrane as a helical span at residues 326 to 347; that stretch reads TLGITIIGVPVGLPAVVTTTMA. Residues 348–719 are Cytoplasmic-facing; that stretch reads VGAAYLAKKQ…IAILDNSLDI (372 aa). Aspartate 378 serves as the catalytic 4-aspartylphosphate intermediate. A Glycyl lysine isopeptide (Lys-Gly) (interchain with G-Cter in ubiquitin) cross-link involves residue lysine 555. Aspartate 634 and aspartate 638 together coordinate Mg(2+). Residues 720 to 738 traverse the membrane as a helical segment; it reads DLIVFIAIFADVATLAIAY. Residues 739–754 lie on the Extracellular side of the membrane; sequence DNAPYSPKPVKWNLPR. Residues 755–774 form a helical membrane-spanning segment; sequence LWGMSIILGIVLAIGSWITL. Topologically, residues 775-824 are cytoplasmic; the sequence is TTMFLPKGGIIQNFGAMNGIMFLQISLTENWLIFITRAAGPFWSSIPSWQ. The helical transmembrane segment at 825–845 threads the bilayer; the sequence is LAGAVFAVDIIATMFTLFGWW. The Extracellular segment spans residues 846–857; sequence SENWTDIVTVVR. The chain crosses the membrane as a helical span at residues 858–874; the sequence is VWIWSIGIFCVLGGFYY. The Cytoplasmic segment spans residues 875–918; the sequence is EMSTSEAFDRLMNGKPMKEKKSTRSVEDFMAAMQRVSTQHEKET. At serine 911 the chain carries Phosphoserine. A phosphothreonine mark is found at threonine 912 and threonine 918.

This sequence belongs to the cation transport ATPase (P-type) (TC 3.A.3) family. Type IIIA subfamily. Interacts with its cargot receptor EXP1 for its transport within the cell and maturation. In terms of processing, phosphorylated on multiple Ser and Thr residues.

The protein localises to the cell membrane. The catalysed reaction is ATP + H2O + H(+)(in) = ADP + phosphate + 2 H(+)(out). Its function is as follows. The plasma membrane ATPase of plants and fungi is a hydrogen ion pump. The proton gradient it generates drives the active transport of nutrients by H(+)-symport. The resulting external acidification and/or internal alkinization may mediate growth responses. The sequence is that of Plasma membrane ATPase 1 (PMA1) from Saccharomyces cerevisiae (strain ATCC 204508 / S288c) (Baker's yeast).